Consider the following 451-residue polypeptide: Gamma-aminobutyric acid receptor subunit alpha-2 (451 aa).

Positions 1–28 (MKTKLNIYNMQFLLFVFLVWDPARLVLA) are cleaved as a signal peptide. At 29-249 (NIQEDEAKNN…MTAHFHLKRK (221 aa)) the chain is on the extracellular side. N-linked (GlcNAc...) asparagine glycosylation is present at Asn38. Arg94 provides a ligand contact to 4-aminobutanoate. The N-linked (GlcNAc...) asparagine glycan is linked to Asn138. Thr157 serves as a coordination point for 4-aminobutanoate. Cysteines 166 and 180 form a disulfide. The helical transmembrane segment at 250-270 (IGYFVIQTYLPCIMTVILSQV) threads the bilayer. Over 271–280 (SFWLNRESVP) the chain is Cytoplasmic. Residues 281–300 (ARTVFGVTTVLTMTTLSISA) form a helical membrane-spanning segment. Residues 301-311 (RNSLPKVAYAT) are Extracellular-facing. A helical transmembrane segment spans residues 312–332 (AMDWFIAVCYAFVFSALIEFA). Residues 333 to 420 (TVNYFTKRGW…FNSVSKIDRM (88 aa)) are Cytoplasmic-facing. Residues 421–441 (SRIVFPVLFGTFNLVYWATYL) form a helical membrane-spanning segment. At 442-451 (NREPVLGVSP) the chain is on the extracellular side.

Belongs to the ligand-gated ion channel (TC 1.A.9) family. Gamma-aminobutyric acid receptor (TC 1.A.9.5) subfamily. GABRA2 sub-subfamily. As to quaternary structure, heteropentamer, formed by a combination of alpha (GABRA1-6), beta (GABRB1-3), gamma (GABRG1-3), delta (GABRD), epsilon (GABRE), rho (GABRR1-3), pi (GABRP) and theta (GABRQ) subunits, each subunit exhibiting distinct physiological and pharmacological properties. Interacts with UBQLN1. Interacts with KIF21B. Interacts with LHFPL4. Interacts with SHISA7; interaction leads to the regulation of GABA(A) receptor trafficking, channel deactivation kinetics and pharmacology. Post-translationally, glycosylated.

It is found in the postsynaptic cell membrane. The protein localises to the cell membrane. The protein resides in the cytoplasmic vesicle membrane. It localises to the cell projection. Its subcellular location is the dendrite. It catalyses the reaction chloride(in) = chloride(out). With respect to regulation, activated by pentobarbital. Inhibited by the antagonist bicuculline. Its function is as follows. Alpha subunit of the heteropentameric ligand-gated chloride channel gated by gamma-aminobutyric acid (GABA), a major inhibitory neurotransmitter in the brain. GABA-gated chloride channels, also named GABA(A) receptors (GABAAR), consist of five subunits arranged around a central pore and contain GABA active binding site(s) located at the alpha and beta subunit interfaces. When activated by GABA, GABAARs selectively allow the flow of chloride anions across the cell membrane down their electrochemical gradient. Chloride influx into the postsynaptic neuron following GABAAR opening decreases the neuron ability to generate a new action potential, thereby reducing nerve transmission. The alpha-2 subunit exhibits synaptogenic activity together with beta-2 and very little to no activity together with beta-3, the gamma-2 subunit being necessary but not sufficient to induce rapid synaptic contacts formation. The chain is Gamma-aminobutyric acid receptor subunit alpha-2 from Homo sapiens (Human).